Consider the following 418-residue polypeptide: AP-3 complex subunit mu-2 (418 aa).

One can recognise an MHD domain in the interval 176-417 (NNEAYFDVIE…MTKAGKFQVR (242 aa)).

It belongs to the adaptor complexes medium subunit family. As to quaternary structure, AP-3 associates with the BLOC-1 complex. Adaptor protein complex 3 (AP-3) is a heterotetramer composed of two large adaptins (delta-type subunit AP3D1 and beta-type subunit AP3B1 or AP3B2), a medium adaptin (mu-type subunit AP3M1 or AP3M2) and a small adaptin (sigma-type subunit APS1 or AP3S2).

The protein localises to the golgi apparatus. It localises to the cytoplasmic vesicle membrane. Functionally, part of the AP-3 complex, an adaptor-related complex which is not clathrin-associated. The complex is associated with the Golgi region as well as more peripheral structures. It facilitates the budding of vesicles from the Golgi membrane and may be directly involved in trafficking to lysosomes. In concert with the BLOC-1 complex, AP-3 is required to target cargos into vesicles assembled at cell bodies for delivery into neurites and nerve terminals. The sequence is that of AP-3 complex subunit mu-2 (AP3M2) from Homo sapiens (Human).